The sequence spans 92 residues: Large ribosomal subunit protein eL34 (92 aa).

This sequence belongs to the eukaryotic ribosomal protein eL34 family.

This chain is Large ribosomal subunit protein eL34, found in Staphylothermus marinus (strain ATCC 43588 / DSM 3639 / JCM 9404 / F1).